The following is an 845-amino-acid chain: Aryl hydrocarbon receptor (845 aa).

A propeptide spanning residues 1 to 10 (MNSSSASITY) is cleaved from the precursor. Residues 1–10 (MNSSSASITY) are compositionally biased toward polar residues. The disordered stretch occupies residues 1-39 (MNSSSASITYASRKRRKPVQKTVKPVPAEGIKSNPSKRH). 2 consecutive short sequence motifs (nuclear localization signal) follow at residues 13–16 (RKRR) and 37–42 (KRHRDR). The bHLH domain occupies 27-80 (PAEGIKSNPSKRHRDRLNTELDRLASLLPFPQDVVNKLDKLSVLRLSVSYLRAK). Required for maintaining the overall integrity of the AHR:ARNT heterodimer and its transcriptional activity stretches follow at residues 50–82 (LASLLPFPQDVVNKLDKLSVLRLSVSYLRAKSF), 117–125 (LLQALNGFV), and 265–267 (FAI). The short motif at 64–72 (LDKLSVLRL) is the Nuclear export signal element. One can recognise a PAS 1 domain in the interval 110-180 (NLQEGEFLLQ…RQLHWALNPS (71 aa)). Residues 274–341 (PSILEIRTKN…CAEYHIRMIK (68 aa)) enclose the PAS 2 domain. In terms of domain architecture, PAC spans 347–385 (LIVFRLLTKDNRWTWVQSNARLVYKNGRPDYIIATQRPL). The tract at residues 820-845 (NNTQPTTHLHPSEARPFSDLTSSGFL) is disordered.

As to quaternary structure, homodimer. Heterodimer; efficient DNA binding requires dimerization with another bHLH protein. Interacts with ARNT; the heterodimer ARNT:AHR binds to core DNA sequence 5'-TGCGTG-3' within the dioxin response element (DRE) of target gene promoters and activates their transcription. Binds MYBBP1A. Interacts with coactivators including SRC-1, RIP140 and NOCA7, and with the corepressor SMRT. Interacts with NEDD8 and IVNS1ABP. Interacts with BMAL1. Interacts with HSP90AB1. Interacts with TIPARP; leading to mono-ADP-ribosylation of AHR and subsequent inhibition of AHR. Post-translationally, mono-ADP-ribosylated, leading to inhibit transcription activator activity of AHR.

Its subcellular location is the cytoplasm. It localises to the nucleus. Ligand-activated transcription factor that enables cells to adapt to changing conditions by sensing compounds from the environment, diet, microbiome and cellular metabolism, and which plays important roles in development, immunity and cancer. Upon ligand binding, translocates into the nucleus, where it heterodimerizes with ARNT and induces transcription by binding to xenobiotic response elements (XRE). Regulates a variety of biological processes, including angiogenesis, hematopoiesis, drug and lipid metabolism, cell motility and immune modulation. Xenobiotics can act as ligands: upon xenobiotic-binding, activates the expression of multiple phase I and II xenobiotic chemical metabolizing enzyme genes (such as the CYP1A1 gene). Mediates biochemical and toxic effects of halogenated aromatic hydrocarbons. Next to xenobiotics, natural ligands derived from plants, microbiota, and endogenous metabolism are potent AHR agonists. Tryptophan (Trp) derivatives constitute an important class of endogenous AHR ligands. Acts as a negative regulator of anti-tumor immunity: indoles and kynurenic acid generated by Trp catabolism act as ligand and activate AHR, thereby promoting AHR-driven cancer cell motility and suppressing adaptive immunity. Regulates the circadian clock by inhibiting the basal and circadian expression of the core circadian component PER1. Inhibits PER1 by repressing the CLOCK-BMAL1 heterodimer mediated transcriptional activation of PER1. The heterodimer ARNT:AHR binds to core DNA sequence 5'-TGCGTG-3' within the dioxin response element (DRE) of target gene promoters and activates their transcription. This is Aryl hydrocarbon receptor (AHR) from Delphinapterus leucas (Beluga whale).